The chain runs to 633 residues: Probable extracellular metalloproteinase 5 (633 aa).

Positions 1–20 are cleaved as a signal peptide; that stretch reads MHGLLLAAAGLLSLPLHVLA. The propeptide occupies 21–244; the sequence is HPQPSTNLAG…VHNVVDYVSH (224 aa). Asn285 carries N-linked (GlcNAc...) asparagine glycosylation. His428 is a Zn(2+) binding site. Glu429 is a catalytic residue. His432 is a binding site for Zn(2+). 2 N-linked (GlcNAc...) asparagine glycosylation sites follow: Asn592 and Asn621.

This sequence belongs to the peptidase M36 family. Requires Zn(2+) as cofactor.

It is found in the secreted. In terms of biological role, secreted metalloproteinase probably acting as a virulence factor. The polypeptide is Probable extracellular metalloproteinase 5 (MEP5) (Trichophyton verrucosum (strain HKI 0517)).